Reading from the N-terminus, the 179-residue chain is Replication restart protein DnaT (179 aa).

The span at 151-168 (SRSSNGGMPQRDINSVSE) shows a compositional bias: polar residues. The segment at 151–179 (SRSSNGGMPQRDINSVSEPDNHIPPGFRG) is disordered.

The protein belongs to the DnaT family. As to quaternary structure, homooligomerizes. Interacts with PriB. Component of the replication restart primosome. Primosome assembly occurs via a 'hand-off' mechanism. PriA binds to replication forks, subsequently PriB then DnaT bind; DnaT then displaces ssDNA to generate the helicase loading substrate.

Involved in the restart of stalled replication forks, which reloads the replicative helicase on sites other than the origin of replication. Can function in multiple replication restart pathways. Displaces ssDNA from a PriB-ssDNA complex. Probably forms a spiral filament on ssDNA. In Salmonella arizonae (strain ATCC BAA-731 / CDC346-86 / RSK2980), this protein is Replication restart protein DnaT.